Here is a 658-residue protein sequence, read N- to C-terminus: Sodium/nucleoside cotransporter 1 (658 aa).

The Cytoplasmic portion of the chain corresponds to 1-75 (MEKASGRKSL…ARTFCQRHAS (75 aa)). A helical membrane pass occupies residues 76–99 (LFKKILLGLLCLAYAAYFLAACIL). The Extracellular segment spans residues 100-104 (DFQRA). Residues 105–123 (LALFVITCLVILVLLLHFL) form a helical membrane-spanning segment. The Cytoplasmic portion of the chain corresponds to 124-142 (KKFLGKKLTRCLKPFKNSQ). A helical transmembrane segment spans residues 143–162 (LRLWIKRVFAGVSLVGLILW). Over 163–173 (LALDTAQRPEQ) the chain is Extracellular. Residues 174–190 (LISFAGICMFVLILFAC) traverse the membrane as a helical segment. Topologically, residues 191-196 (SKHHSA) are cytoplasmic. The chain crosses the membrane as a helical span at residues 197–217 (VSWRTVFWGLGLQFVFGLLVI). At 218–256 (RTDPGFIAFQWLGDQVQIFLAYTVAGSSFVLGDTLVNDV) the chain is on the extracellular side. The helical transmembrane segment at 257-278 (FAFQSLPIIIFFGCVMSILYYL) threads the bilayer. Topologically, residues 279 to 289 (GLVQWVVQKIA) are cytoplasmic. A helical membrane pass occupies residues 290–313 (WFLQVTMRTTATETLAVAGNIFVG). Residues 314–332 (MTEAPLLIRPYLADLTLSE) lie on the Extracellular side of the membrane. Residues 333–355 (IHAVMTSGFATISGTVLGAFISF) form a helical membrane-spanning segment. Topologically, residues 356-361 (GIDASS) are cytoplasmic. A helical transmembrane segment spans residues 362 to 381 (LISASVMGAPCALALSKLVY). The Extracellular segment spans residues 382 to 418 (PEEEESKFKSKEGVKLPRGKESNVLEAASNGATDAIA). Residues 419-441 (LVANVAANLVAFLAVLAFINAAL) form a helical membrane-spanning segment. Over 442–452 (SWLGELVDIQG) the chain is Cytoplasmic. A helical membrane pass occupies residues 453–474 (LTFQVICSYILRPMVYMMGVEW). Residues 475–529 (TDCPMVAEMVGIKFFTNEFVAYQQLSQYKKKRLSGMEEWIDGQKQWISVRAEVIT) are Extracellular-facing. A helical transmembrane segment spans residues 530 to 553 (TFSLCGFANLSSIGITLGGLTSMV). At 554 to 564 (PHRKSDLSKVV) the chain is on the cytoplasmic side. Residues 565–587 (IRALFTGSCVSFISACVAGILYV) traverse the membrane as a helical segment. Topologically, residues 588–658 (PRGAETDCVS…CGFYNNTVCA (71 aa)) are extracellular. The N-linked (GlcNAc...) asparagine glycan is linked to Asn-653.

The protein belongs to the concentrative nucleoside transporter (CNT) (TC 2.A.41) family. In terms of processing, N-glycosylated. N-glycosylation is required for localization to the plasma membrane and the transporter activity.

It localises to the cell membrane. Its subcellular location is the apical cell membrane. It catalyses the reaction uridine(out) + Na(+)(out) = uridine(in) + Na(+)(in). The catalysed reaction is thymidine(out) + Na(+)(out) = thymidine(in) + Na(+)(in). The enzyme catalyses cytidine(out) + Na(+)(out) = cytidine(in) + Na(+)(in). It carries out the reaction adenosine(out) + Na(+)(out) = adenosine(in) + Na(+)(in). With respect to regulation, due to its high apparent affinity but slow transport, adenosine could act as a negative regulator of pyrimidine transport under some conditions. Functionally, sodium and pyrimidine nucleoside symporter of the plasma membrane that imports uridine, thymidine and cytidine into cells by coupling their transport to the transmembrane sodium electrochemical gradient. Also transports adenosine, an atypical substrate transported with high apparent affinity, but low maximum velocity. Therefore, exhibits the transport characteristics of the nucleoside transport system cit or N2 subtype (N2/cit). Involved in renal nucleoside (re)absorption. The protein is Sodium/nucleoside cotransporter 1 (SLC28A1) of Oryctolagus cuniculus (Rabbit).